Consider the following 95-residue polypeptide: Large ribosomal subunit protein eL37x (95 aa).

Positions 19, 22, 34, and 37 each coordinate Zn(2+). Residues 19–37 (CVRCGRRSFHIQKSRCSAC) form a C4-type zinc finger. Positions 73 to 95 (RFKTGFREGTEAKPRSKASASSA) are disordered. A compositionally biased stretch (basic and acidic residues) spans 77 to 86 (GFREGTEAKP).

It belongs to the eukaryotic ribosomal protein eL37 family. Zn(2+) serves as cofactor.

Functionally, binds to the 23S rRNA. The protein is Large ribosomal subunit protein eL37x (RPL37C) of Arabidopsis thaliana (Mouse-ear cress).